Reading from the N-terminus, the 188-residue chain is M-phase phosphoprotein 6 homolog (188 aa).

Positions Glu93 to Asn188 are disordered. Residues Leu120–Glu149 are compositionally biased toward basic and acidic residues. Ser167 is subject to Phosphoserine. Basic residues predominate over residues Arg174 to Asn188.

The protein belongs to the MPP6 family. As to quaternary structure, associates with the RNA exosome complex.

It localises to the nucleus. RNA-binding protein that associates with the RNA exosome complex. In Schizosaccharomyces pombe (strain 972 / ATCC 24843) (Fission yeast), this protein is M-phase phosphoprotein 6 homolog.